We begin with the raw amino-acid sequence, 894 residues long: GTPase-activating protein GYP5 (894 aa).

A compositionally biased stretch (basic and acidic residues) spans 1-23; the sequence is MSSDKSIEKNTDTIASEVHEGDN. A disordered region spans residues 1–324; it reads MSSDKSIEKN…VPPPLEEEMK (324 aa). Ser-25 and Ser-30 each carry phosphoserine. Thr-89 carries the post-translational modification Phosphothreonine. The span at 134-164 shows a compositional bias: basic and acidic residues; the sequence is IEKEYDAVKENEKVYADTKEVVSSPENREVT. 2 stretches are compositionally biased toward polar residues: residues 184–200 and 268–279; these read GTTT…SSEV and SSENEVSAIPTT. Ser-389 carries the phosphoserine modification. The 180-residue stretch at 451-630 folds into the Rab-GAP TBC domain; the sequence is GIPPQIRGII…RIFDIVFVEG (180 aa). Positions 732–872 form a coiled coil; it reads EKEQKKEDHY…INKEQVSTAS (141 aa).

It belongs to the GYP5 family. In terms of assembly, interacts with GYL1 and RVS167; and is part of SEC4-containing complexes.

Its subcellular location is the cytoplasm. It is found in the bud. It localises to the bud neck. Functionally, GTPase-activating protein which accelerates the GTP hydrolysis rate of YPT1 and SEC4. Involved in ER to Golgi trafficking and polarized exocytosis. The polypeptide is GTPase-activating protein GYP5 (GYP5) (Saccharomyces cerevisiae (strain ATCC 204508 / S288c) (Baker's yeast)).